The chain runs to 447 residues: Tyrosine aminotransferase (447 aa).

Position 273 is an N6-(pyridoxal phosphate)lysine (Lys-273). The residue at position 441 (Ser-441) is a Phosphoserine.

Belongs to the class-I pyridoxal-phosphate-dependent aminotransferase family. Homodimer. Pyridoxal 5'-phosphate serves as cofactor.

It carries out the reaction L-tyrosine + 2-oxoglutarate = 3-(4-hydroxyphenyl)pyruvate + L-glutamate. It functions in the pathway amino-acid degradation; L-phenylalanine degradation; acetoacetate and fumarate from L-phenylalanine: step 2/6. In terms of biological role, transaminase involved in tyrosine breakdown. Converts tyrosine to p-hydroxyphenylpyruvate. Can catalyze the reverse reaction, using glutamic acid, with 2-oxoglutarate as cosubstrate (in vitro). Has much lower affinity and transaminase activity for phenylalanine. The sequence is that of Tyrosine aminotransferase (TAT) from Bos taurus (Bovine).